Here is a 357-residue protein sequence, read N- to C-terminus: UDP-N-acetylglucosamine--N-acetylmuramyl-(pentapeptide) pyrophosphoryl-undecaprenol N-acetylglucosamine transferase (357 aa).

Residues 15 to 17 (TGG), asparagine 124, arginine 165, serine 194, and glutamine 288 contribute to the UDP-N-acetyl-alpha-D-glucosamine site.

Belongs to the glycosyltransferase 28 family. MurG subfamily.

Its subcellular location is the cell inner membrane. The catalysed reaction is di-trans,octa-cis-undecaprenyl diphospho-N-acetyl-alpha-D-muramoyl-L-alanyl-D-glutamyl-meso-2,6-diaminopimeloyl-D-alanyl-D-alanine + UDP-N-acetyl-alpha-D-glucosamine = di-trans,octa-cis-undecaprenyl diphospho-[N-acetyl-alpha-D-glucosaminyl-(1-&gt;4)]-N-acetyl-alpha-D-muramoyl-L-alanyl-D-glutamyl-meso-2,6-diaminopimeloyl-D-alanyl-D-alanine + UDP + H(+). Its pathway is cell wall biogenesis; peptidoglycan biosynthesis. Its function is as follows. Cell wall formation. Catalyzes the transfer of a GlcNAc subunit on undecaprenyl-pyrophosphoryl-MurNAc-pentapeptide (lipid intermediate I) to form undecaprenyl-pyrophosphoryl-MurNAc-(pentapeptide)GlcNAc (lipid intermediate II). The chain is UDP-N-acetylglucosamine--N-acetylmuramyl-(pentapeptide) pyrophosphoryl-undecaprenol N-acetylglucosamine transferase from Trichormus variabilis (strain ATCC 29413 / PCC 7937) (Anabaena variabilis).